Reading from the N-terminus, the 190-residue chain is Large ribosomal subunit protein uL5 (190 aa).

This sequence belongs to the universal ribosomal protein uL5 family. In terms of assembly, part of the 50S ribosomal subunit; contacts the 5S rRNA and probably tRNA. Forms a bridge to the 30S subunit in the 70S ribosome.

This is one of the proteins that bind and probably mediate the attachment of the 5S RNA into the large ribosomal subunit, where it forms part of the central protuberance. In the 70S ribosome it contacts protein S13 of the 30S subunit (bridge B1b), connecting the 2 subunits; this bridge is implicated in subunit movement. May contact the P site tRNA; the 5S rRNA and some of its associated proteins might help stabilize positioning of ribosome-bound tRNAs. In Methanocaldococcus jannaschii (strain ATCC 43067 / DSM 2661 / JAL-1 / JCM 10045 / NBRC 100440) (Methanococcus jannaschii), this protein is Large ribosomal subunit protein uL5.